The following is a 947-amino-acid chain: Serine-aspartate repeat-containing protein C (947 aa).

The signal sequence occupies residues 1–50 (MNNKKTATNRKGMIPNRLNKFSIRKYSVGTASILVGTTLIFGLSGHEAKA). The tract at residues 51 to 164 (AEHTNGELNQ…STTPKTTTIK (114 aa)) is disordered. Residues 51 to 495 (AEHTNGELNQ…GSSTANGDQK (445 aa)) are ligand binding A region. Residues 56 to 71 (GELNQSKNETTAPSEN) show a composition bias toward polar residues. Positions 72–83 (KTTKKVDSRQLK) are enriched in basic and acidic residues. The segment covering 84 to 155 (DNTQTATADQ…SNLTQAKDVS (72 aa)) has biased composition (polar residues). CNA-B domains follow at residues 496–606 (KYNL…YKTP) and 607–717 (KYSL…EEET). The disordered stretch occupies residues 678-927 (TQTGTNTTED…NNSNNGTLFG (250 aa)). Acidic residues-rich tracts occupy residues 685–695 (TEDDKDADGGE) and 712–886 (YYEE…DSDS). Residues 910 to 914 (LPETG) carry the LPXTG sorting signal motif. Positions 912-927 (ETGSENNNSNNGTLFG) are enriched in low complexity. T913 bears the Pentaglycyl murein peptidoglycan amidated threonine mark. A propeptide spans 914–947 (GSENNNSNNGTLFGGLFAALGSLLLFGRRKKQNK) (removed by sortase).

Belongs to the serine-aspartate repeat-containing protein (SDr) family. In terms of assembly, homodimerizes; via N2-Domain. Interacts with host NRXN1; this interaction mediates bacterial attachment to host cells.

The protein resides in the secreted. Its subcellular location is the cell wall. Functionally, cell surface-associated calcium-binding protein which plays an important role in adhesion and pathogenesis. Mediates interactions with components of the extracellular matrix such as host NRXN1 to promote bacterial adhesion. The sequence is that of Serine-aspartate repeat-containing protein C (sdrC) from Staphylococcus aureus (strain COL).